The following is a 569-amino-acid chain: Dihydroxy-acid dehydratase (569 aa).

Cysteine 61 serves as a coordination point for [2Fe-2S] cluster. Aspartate 93 provides a ligand contact to Mg(2+). Position 134 (cysteine 134) interacts with [2Fe-2S] cluster. Positions 135 and 136 each coordinate Mg(2+). Lysine 136 bears the N6-carboxylysine mark. A [2Fe-2S] cluster-binding site is contributed by cysteine 211. Residue glutamate 462 participates in Mg(2+) binding. Serine 488 (proton acceptor) is an active-site residue.

This sequence belongs to the IlvD/Edd family. Homodimer. [2Fe-2S] cluster is required as a cofactor. Requires Mg(2+) as cofactor.

The enzyme catalyses (2R)-2,3-dihydroxy-3-methylbutanoate = 3-methyl-2-oxobutanoate + H2O. The catalysed reaction is (2R,3R)-2,3-dihydroxy-3-methylpentanoate = (S)-3-methyl-2-oxopentanoate + H2O. The protein operates within amino-acid biosynthesis; L-isoleucine biosynthesis; L-isoleucine from 2-oxobutanoate: step 3/4. It functions in the pathway amino-acid biosynthesis; L-valine biosynthesis; L-valine from pyruvate: step 3/4. Functions in the biosynthesis of branched-chain amino acids. Catalyzes the dehydration of (2R,3R)-2,3-dihydroxy-3-methylpentanoate (2,3-dihydroxy-3-methylvalerate) into 2-oxo-3-methylpentanoate (2-oxo-3-methylvalerate) and of (2R)-2,3-dihydroxy-3-methylbutanoate (2,3-dihydroxyisovalerate) into 2-oxo-3-methylbutanoate (2-oxoisovalerate), the penultimate precursor to L-isoleucine and L-valine, respectively. The sequence is that of Dihydroxy-acid dehydratase from Tropheryma whipplei (strain TW08/27) (Whipple's bacillus).